The following is a 449-amino-acid chain: Asparagine--tRNA ligase (449 aa).

The protein belongs to the class-II aminoacyl-tRNA synthetase family. As to quaternary structure, homodimer.

The protein resides in the cytoplasm. It catalyses the reaction tRNA(Asn) + L-asparagine + ATP = L-asparaginyl-tRNA(Asn) + AMP + diphosphate + H(+). The sequence is that of Asparagine--tRNA ligase from Deinococcus geothermalis (strain DSM 11300 / CIP 105573 / AG-3a).